The primary structure comprises 47 residues: Wound-induced basic protein (47 aa).

Residues 1–47 (MIYDVNSPLFRSFLSQKGGSSDKRKTEEQKPKEHRPKASENKPIMTE) form a disordered region. Over residues 20–40 (SSDKRKTEEQKPKEHRPKASE) the composition is skewed to basic and acidic residues.

As to expression, abundant in radicals and epicotyls of seedlings and higher in the roots than in stems and leaves of mature plants.

This Phaseolus vulgaris (Kidney bean) protein is Wound-induced basic protein (PR4).